The sequence spans 526 residues: 1,4-beta-D-glucan cellobiohydrolase B (526 aa).

Positions 1–23 (MASSFQLYKALLFFSSLLSAVQA) are cleaved as a signal peptide. The segment at 24–458 (QKVGTQQAEV…SNIKFGPIGS (435 aa)) is catalytic. Glu235 acts as the Nucleophile in catalysis. Glu240 (proton donor) is an active-site residue. Asn293 and Asn400 each carry an N-linked (GlcNAc...) asparagine glycan. The tract at residues 459–490 (TFGNGGGSGPTTTVTTSTATSTTSSATSTATG) is ser/Thr-rich linker. A disordered region spans residues 464 to 488 (GGSGPTTTVTTSTATSTTSSATSTA). Low complexity predominate over residues 468–488 (PTTTVTTSTATSTTSSATSTA). The region spanning 490 to 526 (GQAQHWEQCGGNGWTGPTVCASPWACTVVNSWYSQCL) is the CBM1 domain. 2 disulfide bridges follow: Cys498–Cys515 and Cys509–Cys525.

This sequence belongs to the glycosyl hydrolase 7 (cellulase C) family.

Its subcellular location is the secreted. The catalysed reaction is Hydrolysis of (1-&gt;4)-beta-D-glucosidic linkages in cellulose and cellotetraose, releasing cellobiose from the non-reducing ends of the chains.. Its function is as follows. The biological conversion of cellulose to glucose generally requires three types of hydrolytic enzymes: (1) Endoglucanases which cut internal beta-1,4-glucosidic bonds; (2) Exocellobiohydrolases that cut the disaccharide cellobiose from the non-reducing end of the cellulose polymer chain; (3) Beta-1,4-glucosidases which hydrolyze the cellobiose and other short cello-oligosaccharides to glucose. The sequence is that of 1,4-beta-D-glucan cellobiohydrolase B (cbhB) from Emericella nidulans (strain FGSC A4 / ATCC 38163 / CBS 112.46 / NRRL 194 / M139) (Aspergillus nidulans).